The primary structure comprises 217 residues: Adenylate kinase (217 aa).

10–15 (GAGKGT) is a binding site for ATP. Positions 30–59 (STGDMFRAAMKNETELGLKAKSFIDAGDLV) are NMP. Residues Thr-31, Arg-36, 57–59 (DLV), 85–88 (GFPR), and Gln-92 each bind AMP. The interval 126–163 (GRRVSPTTGKTYHIVYNPPKVEGKCDIDGSDLIQRDDD) is LID. Residues Arg-127 and 136–137 (TY) each bind ATP. Residues Arg-160 and Arg-171 each contribute to the AMP site. Gln-199 is an ATP binding site.

Belongs to the adenylate kinase family. In terms of assembly, monomer.

It is found in the cytoplasm. It carries out the reaction AMP + ATP = 2 ADP. It functions in the pathway purine metabolism; AMP biosynthesis via salvage pathway; AMP from ADP: step 1/1. Functionally, catalyzes the reversible transfer of the terminal phosphate group between ATP and AMP. Plays an important role in cellular energy homeostasis and in adenine nucleotide metabolism. This is Adenylate kinase from Shouchella clausii (strain KSM-K16) (Alkalihalobacillus clausii).